Here is a 260-residue protein sequence, read N- to C-terminus: NADH-ubiquinone oxidoreductase chain 6 (260 aa).

6 consecutive transmembrane segments (helical) span residues 2–22, 30–50, 52–72, 101–121, 142–162, and 211–231; these read LTNYLLIIFCFLALFCSFMII, SILYLILVFCNVTFVLIILGV, FIAIIFLIVYVGAIAVLFLFV, FLFQLFTFVFNFSVVEVFGLF, VPSGLLINGIYIFPNLSNLGI, and FFIFLVVSLILLISMIGSIIL.

The protein belongs to the complex I subunit 6 family.

The protein resides in the mitochondrion membrane. The enzyme catalyses a ubiquinone + NADH + 5 H(+)(in) = a ubiquinol + NAD(+) + 4 H(+)(out). Functionally, core subunit of the mitochondrial membrane respiratory chain NADH dehydrogenase (Complex I) that is believed to belong to the minimal assembly required for catalysis. Complex I functions in the transfer of electrons from NADH to the respiratory chain. The immediate electron acceptor for the enzyme is believed to be ubiquinone. This Acanthamoeba castellanii (Amoeba) protein is NADH-ubiquinone oxidoreductase chain 6 (ND6).